A 164-amino-acid polypeptide reads, in one-letter code: Peptidyl-prolyl cis-trans isomerase A-like 4C (164 aa).

The 157-residue stretch at 7-163 folds into the PPIase cyclophilin-type domain; it reads FFDITVDGKP…KKITIADCGQ (157 aa).

It belongs to the cyclophilin-type PPIase family. PPIase A subfamily.

Its subcellular location is the cytoplasm. It catalyses the reaction [protein]-peptidylproline (omega=180) = [protein]-peptidylproline (omega=0). Its function is as follows. PPIases accelerate the folding of proteins. It catalyzes the cis-trans isomerization of proline imidic peptide bonds in oligopeptides. The sequence is that of Peptidyl-prolyl cis-trans isomerase A-like 4C from Homo sapiens (Human).